Here is a 431-residue protein sequence, read N- to C-terminus: Serine--tRNA ligase (431 aa).

235–237 (TAE) lines the L-serine pocket. ATP contacts are provided by residues 266–268 (RRE) and Val282. Glu289 contributes to the L-serine binding site. Residue 353 to 356 (EASS) coordinates ATP. Residue Ser389 participates in L-serine binding.

It belongs to the class-II aminoacyl-tRNA synthetase family. Type-1 seryl-tRNA synthetase subfamily. As to quaternary structure, homodimer. The tRNA molecule binds across the dimer.

The protein localises to the cytoplasm. It carries out the reaction tRNA(Ser) + L-serine + ATP = L-seryl-tRNA(Ser) + AMP + diphosphate + H(+). It catalyses the reaction tRNA(Sec) + L-serine + ATP = L-seryl-tRNA(Sec) + AMP + diphosphate + H(+). It functions in the pathway aminoacyl-tRNA biosynthesis; selenocysteinyl-tRNA(Sec) biosynthesis; L-seryl-tRNA(Sec) from L-serine and tRNA(Sec): step 1/1. In terms of biological role, catalyzes the attachment of serine to tRNA(Ser). Is also able to aminoacylate tRNA(Sec) with serine, to form the misacylated tRNA L-seryl-tRNA(Sec), which will be further converted into selenocysteinyl-tRNA(Sec). This chain is Serine--tRNA ligase, found in Pelodictyon phaeoclathratiforme (strain DSM 5477 / BU-1).